The sequence spans 142 residues: Regulator of ribonuclease activity B (142 aa).

The tract at residues 117 to 142 is disordered; the sequence is PNADEDEYGEDGEFFDDEFADDDEKR.

Belongs to the RraB family. In terms of assembly, interacts with the C-terminal region of Rne.

It is found in the cytoplasm. In terms of biological role, globally modulates RNA abundance by binding to RNase E (Rne) and regulating its endonucleolytic activity. Can modulate Rne action in a substrate-dependent manner by altering the composition of the degradosome. This Actinobacillus succinogenes (strain ATCC 55618 / DSM 22257 / CCUG 43843 / 130Z) protein is Regulator of ribonuclease activity B.